Here is a 401-residue protein sequence, read N- to C-terminus: Decapping and exoribonuclease protein (401 aa).

The disordered stretch occupies residues M1 to P27. Positions M7–P20 are enriched in basic and acidic residues. Substrate is bound by residues R69, E114, and W149–G151. Position 210 (E210) interacts with Mg(2+). C235 and E252 together coordinate substrate. The Mg(2+) site is built by E252, D254, E271, and L272. Substrate is bound by residues K273 and Q298.

This sequence belongs to the DXO/Dom3Z family. Mg(2+) is required as a cofactor.

Its subcellular location is the nucleus. The catalysed reaction is a 5'-end triphospho-ribonucleoside in mRNA + H2O = a 5'-end phospho-ribonucleoside in mRNA + diphosphate + H(+). The enzyme catalyses a 5'-end NAD(+)-phospho-ribonucleoside in mRNA + H2O = a 5'-end phospho-ribonucleoside in mRNA + NAD(+) + H(+). It catalyses the reaction a 5'-end NAD(+)-phospho-ribonucleoside in snoRNA + H2O = a 5'-end phospho-ribonucleoside in snoRNA + NAD(+) + H(+). It carries out the reaction a 5'-end (N(7)-methyl 5'-triphosphoguanosine)-ribonucleoside-ribonucleotide in mRNA + H2O = a (N(7)-methyl 5'-triphosphoguanosine)-nucleoside + a 5'-end phospho-ribonucleoside in mRNA + H(+). The catalysed reaction is a 5'-end FAD-phospho-ribonucleoside in mRNA + H2O = a 5'-end phospho-ribonucleoside in mRNA + FAD + H(+). The enzyme catalyses a 5'-end CoA-ribonucleoside in mRNA + H2O = 3'-dephospho-CoA + a 5'-end phospho-ribonucleoside in mRNA + H(+). Decapping enzyme for NAD-capped RNAs: specifically hydrolyzes the nicotinamide adenine dinucleotide (NAD) cap from a subset of RNAs by removing the entire NAD moiety from the 5'-end of an NAD-capped RNA. The NAD-cap is present at the 5'-end of some RNAs and snoRNAs. In contrast to the canonical 5'-end N7 methylguanosine (m7G) cap, the NAD cap promotes mRNA decay. Also acts as a non-canonical decapping enzyme that removes the entire cap structure of m7G capped or incompletely capped RNAs and mediates their subsequent degradation. Specifically degrades pre-mRNAs with a defective 5'-end m7G cap and is part of a pre-mRNA capping quality control. Has decapping activity toward incomplete 5'-end m7G cap mRNAs such as unmethylated 5'-end-capped RNA (cap0), while it has no activity toward 2'-O-ribose methylated m7G cap (cap1). Also has 5'-3' exoribonuclease activities: The 5'-end monophosphate RNA is then degraded by the 5'-3' exoribonuclease activity, enabling this enzyme to decap and degrade incompletely capped mRNAs. Also possesses RNA 5'-pyrophosphohydrolase activity by hydrolyzing the 5'-end triphosphate to release pyrophosphates. Exhibits decapping activity towards FAD-capped RNAs. Exhibits decapping activity towards dpCoA-capped RNAs in vitro. In Xenopus laevis (African clawed frog), this protein is Decapping and exoribonuclease protein.